We begin with the raw amino-acid sequence, 129 residues long: Follitropin subunit beta (129 aa).

An N-terminal signal peptide occupies residues 1 to 20 (MKTVQFCFLFCCWKAICCNS). 6 disulfides stabilise this stretch: Cys21/Cys69, Cys35/Cys84, Cys38/Cys122, Cys46/Cys100, Cys50/Cys102, and Cys105/Cys112. Residues Asn25 and Asn42 are each glycosylated (N-linked (GlcNAc...) asparagine).

This sequence belongs to the glycoprotein hormones subunit beta family. In terms of assembly, heterodimer. The active follitropin is a heterodimer composed of an alpha chain/CGA shared with other hormones and a unique beta chain/FSHB shown here.

The protein resides in the secreted. In terms of biological role, together with the alpha chain CGA constitutes follitropin, the follicle-stimulating hormone, and provides its biological specificity to the hormone heterodimer. Binds FSHR, a G protein-coupled receptor, on target cells to activate downstream signaling pathways. Follitropin is involved in follicle development and spermatogenesis in reproductive organs. The sequence is that of Follitropin subunit beta (FSHB) from Aotus nancymaae (Ma's night monkey).